Here is a 245-residue protein sequence, read N- to C-terminus: Eukaryotic translation initiation factor 6 (245 aa).

Phosphoserine; by CK1 is present on residues serine 174 and serine 175. At serine 231 the chain carries Phosphoserine.

This sequence belongs to the eIF-6 family. In terms of assembly, monomer. Associates with the 60S ribosomal subunit. In terms of processing, phosphorylation at Ser-174 and Ser-175 promotes nuclear export.

The protein localises to the cytoplasm. The protein resides in the nucleus. It is found in the nucleolus. In terms of biological role, binds to the 60S ribosomal subunit and prevents its association with the 40S ribosomal subunit to form the 80S initiation complex in the cytoplasm. Is also involved in ribosome biogenesis. Associates with pre-60S subunits in the nucleus and is involved in its nuclear export. Cytoplasmic release of TIF6 from 60S subunits and nuclear relocalization is promoted by the GTPase RIA1/EFL1 and by SDO1. Also required for pre-rRNA processing. The polypeptide is Eukaryotic translation initiation factor 6 (Saccharomyces cerevisiae (strain ATCC 204508 / S288c) (Baker's yeast)).